The following is a 599-amino-acid chain: Aspartate--tRNA(Asp/Asn) ligase (599 aa).

Glutamate 172 contributes to the L-aspartate binding site. Residues 196-199 (QLFK) form an aspartate region. Arginine 218 lines the L-aspartate pocket. ATP is bound by residues 218-220 (RDE) and glutamine 227. Histidine 451 is a binding site for L-aspartate. Residue glutamate 485 participates in ATP binding. Arginine 492 contributes to the L-aspartate binding site. Residue 537-540 (GLDR) coordinates ATP.

It belongs to the class-II aminoacyl-tRNA synthetase family. Type 1 subfamily. Homodimer.

The protein localises to the cytoplasm. The enzyme catalyses tRNA(Asx) + L-aspartate + ATP = L-aspartyl-tRNA(Asx) + AMP + diphosphate. In terms of biological role, aspartyl-tRNA synthetase with relaxed tRNA specificity since it is able to aspartylate not only its cognate tRNA(Asp) but also tRNA(Asn). Reaction proceeds in two steps: L-aspartate is first activated by ATP to form Asp-AMP and then transferred to the acceptor end of tRNA(Asp/Asn). The sequence is that of Aspartate--tRNA(Asp/Asn) ligase from Aromatoleum aromaticum (strain DSM 19018 / LMG 30748 / EbN1) (Azoarcus sp. (strain EbN1)).